Consider the following 434-residue polypeptide: MSFNTLIDWNSCSPEQQRALLTRPAISASDSITRTVSDILYNVKTRGDDVLREYSAKFDKTEVTALRVTPEEIAAAGARLSDELKQAMAAAVKNIETFHSAQTLPPVDVETQPGVRCQQVTRPVASVGLYIPGGSAPLFSTVLMLATPARIAGCQKVVLCSPPPIADEILYAAQLCGVQEIFNVGGAQAIAALAFGSESVPKVDKIFGPGNAFVTEAKRQVSQRLDGAAIDMPAGPSEVLVIADSGATPDFVASDLLSQAEHGPDSQVILLTPDADIARKVAEAVERQLAELPRADTARQALSASRLIVTKDLAQCVAISNQYGPEHLIIQTRNARDLVDAITSAGSVFLGDWSPESAGDYASGTNHVLPTYGYTATCSSLGLADFQKRMTVQELSKAGFSALASTIETLAAAERLTAHKNAVTLRVNALKEQA.

NAD(+)-binding residues include Tyr130, Gln188, and Asn211. Residues Ser237, Gln259, and His262 each contribute to the substrate site. Residues Gln259 and His262 each contribute to the Zn(2+) site. Residues Glu326 and His327 each act as proton acceptor in the active site. Substrate-binding residues include His327, Asp360, Glu414, and His419. Asp360 lines the Zn(2+) pocket. His419 is a Zn(2+) binding site.

The protein belongs to the histidinol dehydrogenase family. Homodimer. Zn(2+) is required as a cofactor.

The catalysed reaction is L-histidinol + 2 NAD(+) + H2O = L-histidine + 2 NADH + 3 H(+). Its pathway is amino-acid biosynthesis; L-histidine biosynthesis; L-histidine from 5-phospho-alpha-D-ribose 1-diphosphate: step 9/9. Functionally, catalyzes the sequential NAD-dependent oxidations of L-histidinol to L-histidinaldehyde and then to L-histidine. In Salmonella paratyphi A (strain ATCC 9150 / SARB42), this protein is Histidinol dehydrogenase.